A 293-amino-acid polypeptide reads, in one-letter code: Ribokinase (293 aa).

Substrate contacts are provided by residues 11 to 13 (SMD), 39 to 43 (GKGAN), and Glu139. ATP-binding positions include Asn183 and 210–215 (TEGKQG). Residues Asp236 and Thr238 each coordinate K(+). ATP is bound by residues 241–242 (GD) and Asn266. Asp242 lines the substrate pocket. Catalysis depends on Asp242, which acts as the Proton acceptor. Ser272, Ser275, and Gly277 together coordinate K(+).

The protein belongs to the carbohydrate kinase PfkB family. Ribokinase subfamily. As to quaternary structure, homodimer. The cofactor is Mg(2+).

Its subcellular location is the cytoplasm. The catalysed reaction is D-ribose + ATP = D-ribose 5-phosphate + ADP + H(+). The protein operates within carbohydrate metabolism; D-ribose degradation; D-ribose 5-phosphate from beta-D-ribopyranose: step 2/2. Its activity is regulated as follows. Activated by a monovalent cation that binds near, but not in, the active site. The most likely occupant of the site in vivo is potassium. Ion binding induces a conformational change that may alter substrate affinity. Functionally, catalyzes the phosphorylation of ribose at O-5 in a reaction requiring ATP and magnesium. The resulting D-ribose-5-phosphate can then be used either for sythesis of nucleotides, histidine, and tryptophan, or as a component of the pentose phosphate pathway. This is Ribokinase from Bacillus subtilis (strain 168).